Reading from the N-terminus, the 971-residue chain is MASNNVAQFAAELKMPAGVLLEQLQAAGVQKASEDDALSETDKARLLDHLRKSHGATDGDKRKITLTRKHTSEIKQSDATGKARTIQVEVRKKRTFVKRDDVAEGADQGQAQVAEADDDAELKRREEEARREAELLEKQAQELRERQERLEREEAERRAREEAAEAERRRAEEEAATKRAAAEAAAAQQQAAAQQAAAEQEATPTQSAQDEARAAAERAAQREAAKKAEDAAREAADKARAEQEEISKRRAAAEAEARAIREMMNTPRKAVVKAVEPPKPVEPPKPAEAKGTLHKPAKPEGAQARPAVKKPAGAAAPATTQAPAGAGDRNKKPGAGKGGWQDDAAKRRGIKTRGDSSGGVDRGWRGGPKGRGRHQDSSTFQAPTEPIVREVHVPETVSVADLAHKMSIKASEVIKVMMKMGQMVTINQVLDQETAMIIVEELGHRAVAAKLDDPEALLVEGESGTDAEQLPRPPVVTVMGHVDHGKTSLLDHIRRAKVAAGEAGGITQHIGAYHVDTPRGVITFLDTPGHEAFTAMRARGAKATDIVVLVVAADDGVMPQTKEAIAHAKAGGVPIVVAINKIDKPEANPDRVKQELVAEGVVPEEYGGDSPFVPVSAKTGAGIDDLLENVLLQAEVLELKAPVEAPAKGIVIEAKLDKGKGPVATILVQSGTLNRGDIVLAGTAYGRVRAMLDENGKPTKEAGPSIPVEIQGLSEVPGAGEEVIVLPDERKAREIALFRQGKFRDVKLAKQQAAKLESMLEQMGEGEVQNLPLIIKADVQGSQEALVQSLLKLSTDEVRVQIVHSAVGGISENDVNLATASKAVIIGFNTRADAQARKLAEANGIDIRYYNIIYDAVDEVKAAMSGMLAPEKREVITGMVEVRQVFKVPKIGTVAGCMVTDGIVKRSSSVRVLRNNVVIFTGELESLKRFKDDVKEVKQGFECGMSVKNFNDVTEGDQFEVFEVTEVARTL.

Residues 48–63 show a composition bias toward basic and acidic residues; sequence DHLRKSHGATDGDKRK. Disordered stretches follow at residues 48 to 86 and 101 to 381; these read DHLR…ARTI and DVAE…STFQ. The span at 105 to 114 shows a compositional bias: low complexity; that stretch reads GADQGQAQVA. Over residues 121–181 the composition is skewed to basic and acidic residues; it reads ELKRREEEAR…EEEAATKRAA (61 aa). Over residues 182–203 the composition is skewed to low complexity; that stretch reads AEAAAAQQQAAAQQAAAEQEAT. A compositionally biased stretch (basic and acidic residues) spans 210 to 261; sequence DEARAAAERAAQREAAKKAEDAAREAADKARAEQEEISKRRAAAEAEARAIR. Residues 277-286 are compositionally biased toward pro residues; it reads PPKPVEPPKP. Residues 304–326 show a composition bias toward low complexity; it reads ARPAVKKPAGAAAPATTQAPAGA. The span at 356–369 shows a compositional bias: gly residues; the sequence is SSGGVDRGWRGGPK. Positions 471–640 constitute a tr-type G domain; that stretch reads PRPPVVTVMG…LLQAEVLELK (170 aa). Residues 480-487 are G1; sequence GHVDHGKT. Position 480-487 (480-487) interacts with GTP; it reads GHVDHGKT. The G2 stretch occupies residues 505–509; it reads GITQH. A G3 region spans residues 526 to 529; it reads DTPG. GTP is bound by residues 526–530 and 580–583; these read DTPGH and NKID. The G4 stretch occupies residues 580-583; that stretch reads NKID. The interval 616 to 618 is G5; it reads SAK.

The protein belongs to the TRAFAC class translation factor GTPase superfamily. Classic translation factor GTPase family. IF-2 subfamily.

It is found in the cytoplasm. Functionally, one of the essential components for the initiation of protein synthesis. Protects formylmethionyl-tRNA from spontaneous hydrolysis and promotes its binding to the 30S ribosomal subunits. Also involved in the hydrolysis of GTP during the formation of the 70S ribosomal complex. The protein is Translation initiation factor IF-2 of Burkholderia orbicola (strain MC0-3).